We begin with the raw amino-acid sequence, 300 residues long: Haloalkane dehalogenase 1 (300 aa).

Positions 47–176 (PPIVLLHGEP…FARYSPVLPA (130 aa)) constitute an AB hydrolase-1 domain. Asp-123 (nucleophile) is an active-site residue. Asp-250 acts as the Proton donor in catalysis. His-279 serves as the catalytic Proton acceptor.

This sequence belongs to the haloalkane dehalogenase family. Type 1 subfamily. As to quaternary structure, monomer.

The catalysed reaction is 1-haloalkane + H2O = a halide anion + a primary alcohol + H(+). Catalyzes hydrolytic cleavage of carbon-halogen bonds in halogenated aliphatic compounds, leading to the formation of the corresponding primary alcohols, halide ions and protons. This is Haloalkane dehalogenase 1 (dhmA1) from Mycobacterium bovis (strain ATCC BAA-935 / AF2122/97).